The chain runs to 242 residues: UPF0173 metal-dependent hydrolase Rxyl_1261 (242 aa).

This sequence belongs to the UPF0173 family.

This Rubrobacter xylanophilus (strain DSM 9941 / JCM 11954 / NBRC 16129 / PRD-1) protein is UPF0173 metal-dependent hydrolase Rxyl_1261.